We begin with the raw amino-acid sequence, 367 residues long: tRNA-specific 2-thiouridylase MnmA (367 aa).

Residues 7 to 14 (AMSGGVDS) and Met33 each bind ATP. The Nucleophile role is filled by Cys108. Cys108 and Cys200 are disulfide-bonded. Gly132 serves as a coordination point for ATP. Positions 150 to 152 (KDQ) are interaction with tRNA. Cys200 serves as the catalytic Cysteine persulfide intermediate. The segment at 301–302 (RY) is interaction with tRNA.

This sequence belongs to the MnmA/TRMU family.

The protein resides in the cytoplasm. It carries out the reaction S-sulfanyl-L-cysteinyl-[protein] + uridine(34) in tRNA + AH2 + ATP = 2-thiouridine(34) in tRNA + L-cysteinyl-[protein] + A + AMP + diphosphate + H(+). Its function is as follows. Catalyzes the 2-thiolation of uridine at the wobble position (U34) of tRNA, leading to the formation of s(2)U34. This chain is tRNA-specific 2-thiouridylase MnmA, found in Thermus thermophilus (strain ATCC BAA-163 / DSM 7039 / HB27).